The primary structure comprises 128 residues: Large ribosomal subunit protein bL17 (128 aa).

It belongs to the bacterial ribosomal protein bL17 family. In terms of assembly, part of the 50S ribosomal subunit. Contacts protein L32.

The polypeptide is Large ribosomal subunit protein bL17 (Streptococcus sanguinis (strain SK36)).